Here is a 1153-residue protein sequence, read N- to C-terminus: Myosin-3 (1153 aa).

A Myosin N-terminal SH3-like domain is found at Lys104–Pro153. The 673-residue stretch at Asp157–Asn829 folds into the Myosin motor domain. Residues Gly248–Thr255 and Asn296–Lys304 contribute to the ATP site. Actin-binding regions lie at residues Leu581–Leu615 and Leu709–Asn731. IQ domains follow at residues Thr831–Ile860, Leu854–Ala883, and Thr903–Gly932. Residues Tyr948–Glu996 adopt a coiled-coil conformation. The disordered stretch occupies residues Asp1020–Arg1050. Residues Asn1024–Asp1033 show a composition bias toward polar residues.

It belongs to the TRAFAC class myosin-kinesin ATPase superfamily. Myosin family. Plant myosin class VIII subfamily. Homodimer.

Functionally, myosin heavy chain that is required for the cell cycle-regulated transport of various organelles and proteins for their segregation. Functions by binding with its tail domain to receptor proteins on organelles and exerting force with its N-terminal motor domain against actin filaments, thereby transporting its cargo along polarized actin cables. The chain is Myosin-3 (VIII-A) from Arabidopsis thaliana (Mouse-ear cress).